Reading from the N-terminus, the 490-residue chain is Betaine aldehyde dehydrogenase (490 aa).

Residues isoleucine 27 and aspartate 93 each contribute to the K(+) site. Glycine 150–tryptophan 152 serves as a coordination point for NAD(+). The Charge relay system role is filled by lysine 162. Lysine 176 to glutamate 179 is a binding site for NAD(+). Valine 180 is a binding site for K(+). Residue glycine 230 to threonine 233 participates in NAD(+) binding. A K(+)-binding site is contributed by leucine 246. The Proton acceptor role is filled by glutamate 252. NAD(+) is bound by residues glycine 254, cysteine 286, and glutamate 387. Cysteine 286 serves as the catalytic Nucleophile. Residue cysteine 286 is modified to Cysteine sulfenic acid (-SOH). K(+) contacts are provided by lysine 457 and glycine 460. The active-site Charge relay system is glutamate 464.

The protein belongs to the aldehyde dehydrogenase family. In terms of assembly, dimer of dimers. K(+) serves as cofactor.

It catalyses the reaction betaine aldehyde + NAD(+) + H2O = glycine betaine + NADH + 2 H(+). The protein operates within amine and polyamine biosynthesis; betaine biosynthesis via choline pathway; betaine from betaine aldehyde: step 1/1. Its function is as follows. Involved in the biosynthesis of the osmoprotectant glycine betaine. Catalyzes the irreversible oxidation of betaine aldehyde to the corresponding acid. This is Betaine aldehyde dehydrogenase from Pseudomonas putida (strain ATCC 700007 / DSM 6899 / JCM 31910 / BCRC 17059 / LMG 24140 / F1).